The chain runs to 363 residues: UDP-3-O-acylglucosamine N-acyltransferase (363 aa).

The active-site Proton acceptor is the histidine 259.

The protein belongs to the transferase hexapeptide repeat family. LpxD subfamily. In terms of assembly, homotrimer.

The catalysed reaction is a UDP-3-O-[(3R)-3-hydroxyacyl]-alpha-D-glucosamine + a (3R)-hydroxyacyl-[ACP] = a UDP-2-N,3-O-bis[(3R)-3-hydroxyacyl]-alpha-D-glucosamine + holo-[ACP] + H(+). Its pathway is bacterial outer membrane biogenesis; LPS lipid A biosynthesis. Catalyzes the N-acylation of UDP-3-O-acylglucosamine using 3-hydroxyacyl-ACP as the acyl donor. Is involved in the biosynthesis of lipid A, a phosphorylated glycolipid that anchors the lipopolysaccharide to the outer membrane of the cell. This Ruegeria pomeroyi (strain ATCC 700808 / DSM 15171 / DSS-3) (Silicibacter pomeroyi) protein is UDP-3-O-acylglucosamine N-acyltransferase.